Reading from the N-terminus, the 1279-residue chain is ATP-dependent helicase/nuclease subunit A (1279 aa).

In terms of domain architecture, UvrD-like helicase ATP-binding spans 4–499 (TKWTDEQRQA…VKLFKNFRSR (496 aa)). 25–32 (AGAGAGKT) provides a ligand contact to ATP. The UvrD-like helicase C-terminal domain maps to 526–853 (EEALKVGASY…RIMSIHKSKG (328 aa)).

The protein belongs to the helicase family. AddA subfamily. As to quaternary structure, heterodimer of AddA and AddB/RexB. Mg(2+) is required as a cofactor.

The catalysed reaction is Couples ATP hydrolysis with the unwinding of duplex DNA by translocating in the 3'-5' direction.. It carries out the reaction ATP + H2O = ADP + phosphate + H(+). The heterodimer acts as both an ATP-dependent DNA helicase and an ATP-dependent, dual-direction single-stranded exonuclease. Recognizes the chi site generating a DNA molecule suitable for the initiation of homologous recombination. The AddA nuclease domain is required for chi fragment generation; this subunit has the helicase and 3' -&gt; 5' nuclease activities. The sequence is that of ATP-dependent helicase/nuclease subunit A from Clostridium botulinum (strain Loch Maree / Type A3).